Reading from the N-terminus, the 1009-residue chain is Type VII secretion system accessory factor EsaA (1009 aa).

Helical transmembrane passes span 7–27 (IYAL…IFFV), 822–842 (ISPT…AYIF), 869–889 (VITS…VGLI), 903–923 (KFIL…TYLL), 928–948 (SIGM…MNNL), and 979–999 (IGLA…LNMF).

The protein belongs to the EsaA family. As to quaternary structure, homodimer. Interacts with EssB.

It is found in the cell membrane. Functionally, component of the type VII secretion system (Ess). Provides together with EssB and other components such as EssC and EssE a secretion platform across the cytoplasmic membrane in the host. In Staphylococcus aureus (strain MSSA476), this protein is Type VII secretion system accessory factor EsaA.